The primary structure comprises 269 residues: Formamidopyrimidine-DNA glycosylase (269 aa).

The active-site Schiff-base intermediate with DNA is the P2. The active-site Proton donor is E3. Residue K58 is the Proton donor; for beta-elimination activity of the active site. DNA-binding residues include H91, R110, and K150. The FPG-type zinc finger occupies 235–269 (SVYGCKNKKCYRCKGIIIKFVQNQRSTFYCKKCQT). Catalysis depends on R259, which acts as the Proton donor; for delta-elimination activity.

This sequence belongs to the FPG family. In terms of assembly, monomer. Requires Zn(2+) as cofactor.

The enzyme catalyses Hydrolysis of DNA containing ring-opened 7-methylguanine residues, releasing 2,6-diamino-4-hydroxy-5-(N-methyl)formamidopyrimidine.. The catalysed reaction is 2'-deoxyribonucleotide-(2'-deoxyribose 5'-phosphate)-2'-deoxyribonucleotide-DNA = a 3'-end 2'-deoxyribonucleotide-(2,3-dehydro-2,3-deoxyribose 5'-phosphate)-DNA + a 5'-end 5'-phospho-2'-deoxyribonucleoside-DNA + H(+). Functionally, involved in base excision repair of DNA damaged by oxidation or by mutagenic agents. Acts as a DNA glycosylase that recognizes and removes damaged bases. Has a preference for oxidized purines, such as 7,8-dihydro-8-oxoguanine (8-oxoG). Has AP (apurinic/apyrimidinic) lyase activity and introduces nicks in the DNA strand. Cleaves the DNA backbone by beta-delta elimination to generate a single-strand break at the site of the removed base with both 3'- and 5'-phosphates. This chain is Formamidopyrimidine-DNA glycosylase, found in Vesicomyosocius okutanii subsp. Calyptogena okutanii (strain HA).